A 427-amino-acid polypeptide reads, in one-letter code: Trigger factor (427 aa).

The PPIase FKBP-type domain occupies 163–248; the sequence is GDTVVIDFVG…IHEVKAKEVP (86 aa).

It belongs to the FKBP-type PPIase family. Tig subfamily.

It is found in the cytoplasm. It catalyses the reaction [protein]-peptidylproline (omega=180) = [protein]-peptidylproline (omega=0). In terms of biological role, involved in protein export. Acts as a chaperone by maintaining the newly synthesized protein in an open conformation. Functions as a peptidyl-prolyl cis-trans isomerase. The chain is Trigger factor from Streptococcus pneumoniae (strain CGSP14).